The sequence spans 1902 residues: PI-type proteinase (1902 aa).

The N-terminal stretch at 1 to 33 (MQRKKKGLSILLAGTVALGALAVLPVGEIQAKA) is a signal peptide. Residues 34 to 187 (AISQQTKGSS…VTLAKVYYPT (154 aa)) constitute a propeptide that is removed on maturation. The Peptidase S8 domain maps to 191–697 (ANSMANVQAV…AGLVDVKAAI (507 aa)). Residues D217, H281, and S620 each act as charge relay system in the active site. Residues 1796-1874 (GKGDGTTGTS…GALPKTGETT (79 aa)) form a disordered region. Residues 1797 to 1812 (KGDGTTGTSDKGGGQG) are compositionally biased toward gly residues. Residues 1830–1843 (SQPSSGGNIPTNPA) are compositionally biased toward polar residues. The LPXTG sorting signal motif lies at 1867 to 1871 (LPKTG). The residue at position 1870 (T1870) is a Pentaglycyl murein peptidoglycan amidated threonine. Positions 1871–1902 (GETTERPAFGFLGVIVVILMGVLGLKRKQREE) are cleaved as a propeptide — removed by sortase.

Belongs to the peptidase S8 family.

It is found in the secreted. Its subcellular location is the cell wall. It catalyses the reaction Endopeptidase activity with very broad specificity, although some subsite preference have been noted, e.g. large hydrophobic residues in the P1 and P4 positions, and Pro in the P2 position. Best known for its action on caseins, although it has been shown to hydrolyze hemoglobin and oxidized insulin B-chain.. Functionally, protease which breaks down milk proteins during the growth of the bacteria on milk. The protein is PI-type proteinase (prtP) of Lactococcus lactis subsp. cremoris (Streptococcus cremoris).